Here is a 507-residue protein sequence, read N- to C-terminus: MALPIILCLAVILWTSWRLLDALFLSPLHRVPGPVLARLTPLRAIYARLPSRVIPAALADFHSYGDIYLSKPRTITISHPRDVRAILASSEFQKIDVYHGLNDPVMANIVTFSDPKLASRRRRQIGPYFNPSYLAKMEELILRCGCRAVADKWGRLIAQQGHGPQKSVKVNYRHDLQLATFDIMSALAFGRWLDSLKEEGESVAIVEWIMATAVYIGVRINFRLLMVFPFSRLVRRWTRAYAEFVQFSKHAVASRKELLAQGCQKPVDLLQAFIDAEDPDSKVKMTTVEVQAESVGMQLAGSETTAASLTWAVHLFTLYPEYYRIAVDEVRGQFGPNHLITYADCSRLVFLEAFVYEMLRYTPITSSFMPRVSFTKGTTLQGHYIPPGTEIAFNLIAMNNREDVWEEPERFLPDRFLKDPDLKRSVFAFSYGTRSCIGRHLAWMEMMTILANLLKDYDWSLPEDSLYGPHHVDEKGIPIRMPSKCHIVFAPTHPDRDCQLVISRPKT.

An N-terminal signal peptide occupies residues 1–22 (MALPIILCLAVILWTSWRLLDA). Cysteine 436 contributes to the heme binding site.

This sequence belongs to the cytochrome P450 family. It depends on heme as a cofactor.

The protein operates within mycotoxin biosynthesis. In terms of biological role, cytochrome P450 monooxygenase; part of the gene cluster that mediates the biosynthesis of helvolic acid, an antibacterial nortriterpenoid. Protostadienol synthase helA cyclizes (3S)-oxidosqualene to (17Z)-protosta-17(20),24-dien-3-beta-ol (protostadienol). The synthesis of protostadienol is followed by several steps of monooxygenation, dehydrogenation, and acyl transfer to yield the final helvolic acid. Following the cyclization to the tetracyclic protostadienol by helA, cytochrome P450 monooxygenases helB1-mediated and helB2-mediated oxidation at C-4 and C-16, acyltransferase helD2-dependent acetylation of 16-OH, oxidation of C-21 by cytochrome P450 monooxygenase helB4, and short chain dehydrogenase helC-dependent oxidative decarboxylation yield the fusidane skeleton. This intermediate is further modified in three additional steps mediated by the cytochrome P450 monooxygenase helB3, the acyltransferase helD1, and the 3-ketosteroid 1-dehydrogenase helE to give helvolic acid. Compared with the late stages in the biosynthesis of helvolic acid, enzymes involved in the early stage modifications act in a relatively strict order. The hydroxylation of C-16 by helB1 and subsequent acetylation by helD2 should occur before the helB3-mediated oxidation of C-21. C-4 demethylation in fusidane-type antibiotics proceeds in an unusual manner though it is also achieved by oxidative decarboxylation. The methyl group at C-4 beta position is oxidized by helB1 and subsequently removed by the short chain dehydrogenase helC. This Aspergillus fumigatus (strain ATCC MYA-4609 / CBS 101355 / FGSC A1100 / Af293) (Neosartorya fumigata) protein is Cytochrome P450 monooxygenase helB2.